Here is a 258-residue protein sequence, read N- to C-terminus: SLA class II histocompatibility antigen, DQ haplotype D beta chain (258 aa).

A signal peptide spans 1-31 (MVALRLPRGLWTAALTVMLVVLGAPVAEGRD). Positions 32–123 (SPQDFVVQFK…IEEGTTLQRR (92 aa)) are beta-1. Residues 32 to 227 (SPQDFVVQFK…RAQSESAQSK (196 aa)) are Extracellular-facing. Disulfide bonds link C44–C108 and C146–C202. N48 is a glycosylation site (N-linked (GlcNAc...) asparagine). Residues 124-217 (VQPTVTISPS…SLQSPILVEW (94 aa)) are beta-2. Residues 126–230 (PTVTISPSKA…SESAQSKMLS (105 aa)) enclose the Ig-like C1-type domain. The segment at 218–227 (RAQSESAQSK) is connecting peptide. Residues 228 to 248 (MLSGVGGFVLGLIFLGLGLFI) traverse the membrane as a helical segment. The Cytoplasmic portion of the chain corresponds to 249–258 (RHRSQKGLVR).

It belongs to the MHC class II family.

It localises to the membrane. The sequence is that of SLA class II histocompatibility antigen, DQ haplotype D beta chain from Sus scrofa (Pig).